A 168-amino-acid chain; its full sequence is Probable chorismate pyruvate-lyase (168 aa).

Substrate-binding residues include arginine 75, isoleucine 114, and glutamate 155.

It belongs to the UbiC family.

It is found in the cytoplasm. The enzyme catalyses chorismate = 4-hydroxybenzoate + pyruvate. The protein operates within cofactor biosynthesis; ubiquinone biosynthesis. Functionally, removes the pyruvyl group from chorismate, with concomitant aromatization of the ring, to provide 4-hydroxybenzoate (4HB) for the ubiquinone pathway. The chain is Probable chorismate pyruvate-lyase from Psychrobacter arcticus (strain DSM 17307 / VKM B-2377 / 273-4).